The chain runs to 107 residues: Essential MCU regulator, mitochondrial (107 aa).

A mitochondrion-targeting transit peptide spans 1–52 (MASGAARWLVLAPVRSGALRSGPSLRKDGDVSAAWSGSGRSLVPSRSVIVTR). Positions 1 to 52 (MASGAARWLVLAPVRSGALRSGPSLRKDGDVSAAWSGSGRSLVPSRSVIVTR) are interaction with MAIP1. The Mitochondrial matrix portion of the chain corresponds to 54–65 (GAILPKPVKMSF). Residues 66–85 (GLLRVFSIVIPFLYVGTLIS) form a helical membrane-spanning segment. Residues 81-85 (GTLIS) carry the GXXXX[G/A/S] motif. Topologically, residues 86 to 107 (KNFAALLEEHDIFVPEDDDDDD) are mitochondrial intermembrane.

It belongs to the SMDT1/EMRE family. As to quaternary structure, component of the uniplex complex, composed of MCU, EMRE/SMDT1, MICU1 and MICU2 (or MICU3) in a 4:4:1:1 stoichiometry. The number of EMRE/SMDT1 molecules is hovewer variable, ranging from 1 to 4 copies per uniplex complex, leading to uniplex complexes with distinct gatekeeping profiles. Interacts (via its C-terminal poly-Asp tail) with MCUR1; the interaction is direct. Unprocessed form interacts (via transit peptide) with MAIP1. Undergoes proteolytic degradation in neurons: degraded by AFG3L2 and SPG7 before SMDT1/EMRE assembly with the uniporter complex, limiting the availability of SMDT1/EMRE for MCU assembly and promoting efficient assembly of gatekeeper subunits with MCU.

The protein localises to the mitochondrion inner membrane. Essential regulatory subunit of the mitochondrial calcium uniporter complex (uniplex), a complex that mediates calcium uptake into mitochondria. Required to bridge the calcium-sensing proteins MICU1 with the calcium-conducting subunit MCU. Acts by mediating activation of MCU and retention of MICU1 to the MCU pore, in order to ensure tight regulation of the uniplex complex and appropriate responses to intracellular calcium signaling. The polypeptide is Essential MCU regulator, mitochondrial (Homo sapiens (Human)).